A 1253-amino-acid polypeptide reads, in one-letter code: Cytoplasmic FMR1-interacting protein 2 (1253 aa).

Lys1037 carries the N6-acetyllysine modification.

This sequence belongs to the CYFIP family. In terms of assembly, component of the WAVE1 complex composed of ABI2, CYFIP2, BRK1, NCKAP1 and WASF1/WAVE1. Interacts with RAC1 (activated form) which causes the complex to dissociate, releasing activated WASF1. The complex can also be activated by NCK1. Interacts with SHANK3; the interaction mediates the association of SHANK3 with the WAVE1 complex. Interacts with FMR1; the interaction occurs in a RNA-dependent manner. Interacts with FXR1 and FXR2. Interacts with TMEM108 (via N-terminus); the interaction associates TMEM108 with the WAVE1 complex.

It localises to the cytoplasm. It is found in the nucleus. The protein localises to the perinuclear region. The protein resides in the synapse. Its subcellular location is the synaptosome. Functionally, involved in T-cell adhesion and p53-dependent induction of apoptosis. Does not bind RNA. As component of the WAVE1 complex, required for BDNF-NTRK2 endocytic trafficking and signaling from early endosomes. The chain is Cytoplasmic FMR1-interacting protein 2 from Pongo abelii (Sumatran orangutan).